We begin with the raw amino-acid sequence, 443 residues long: EP1-like glycoprotein 4 (443 aa).

The first 22 residues, 1-22 (MEFSTTLALFFTLSIFLVGAQA), serve as a signal peptide directing secretion. In terms of domain architecture, Bulb-type lectin spans 29 to 159 (QFRVVNEGGY…NGKFVWQSFD (131 aa)). N-linked (GlcNAc...) asparagine glycans are attached at residues N66, N102, N258, and N269. A WD repeat occupies 254–296 (GSQFNVSTFLSRPKHNATLSFLRLESDGNIRVWSYSTLATSTA). The PAN domain occupies 356–433 (CDPKTFHYFK…TSLVAYVKAP (78 aa)). 2 disulfide bridges follow: C387–C409 and C391–C397. An N-linked (GlcNAc...) asparagine glycan is attached at N434.

It localises to the secreted. The protein resides in the cell wall. The polypeptide is EP1-like glycoprotein 4 (Arabidopsis thaliana (Mouse-ear cress)).